Consider the following 442-residue polypeptide: Coiled-coil domain-containing protein 112 (442 aa).

2 coiled-coil regions span residues 23-116 (LEEL…RRIE) and 217-249 (LEEK…VDTV). Disordered regions lie at residues 245–272 (KVDT…KKQK), 289–312 (KLAS…QRQS), and 392–442 (EKVE…RQGI). 2 stretches are compositionally biased toward basic and acidic residues: residues 256–268 (KAED…EEQR) and 294–310 (LREE…ERQR). Residues 281–400 (RKSLEMSAKL…KEKVENNVSR (120 aa)) are a coiled coil.

It is found in the cytoplasm. It localises to the cytoskeleton. Its subcellular location is the microtubule organizing center. The protein resides in the centrosome. The protein localises to the centriolar satellite. The protein is Coiled-coil domain-containing protein 112 (Ccdc112) of Mus musculus (Mouse).